A 356-amino-acid polypeptide reads, in one-letter code: Histidinol-phosphate aminotransferase 2 (356 aa).

Position 214 is an N6-(pyridoxal phosphate)lysine (Lys214).

This sequence belongs to the class-II pyridoxal-phosphate-dependent aminotransferase family. Histidinol-phosphate aminotransferase subfamily. As to quaternary structure, homodimer. It depends on pyridoxal 5'-phosphate as a cofactor.

The enzyme catalyses L-histidinol phosphate + 2-oxoglutarate = 3-(imidazol-4-yl)-2-oxopropyl phosphate + L-glutamate. Its pathway is amino-acid biosynthesis; L-histidine biosynthesis; L-histidine from 5-phospho-alpha-D-ribose 1-diphosphate: step 7/9. This is Histidinol-phosphate aminotransferase 2 from Dechloromonas aromatica (strain RCB).